A 197-amino-acid polypeptide reads, in one-letter code: HTH-type transcriptional regulator BetI (197 aa).

The 61-residue stretch at P8–L68 folds into the HTH tetR-type domain. Positions S31–F50 form a DNA-binding region, H-T-H motif.

Its pathway is amine and polyamine biosynthesis; betaine biosynthesis via choline pathway [regulation]. Repressor involved in the biosynthesis of the osmoprotectant glycine betaine. It represses transcription of the choline transporter BetT and the genes of BetAB involved in the synthesis of glycine betaine. In Pseudomonas fluorescens (strain ATCC BAA-477 / NRRL B-23932 / Pf-5), this protein is HTH-type transcriptional regulator BetI.